The sequence spans 441 residues: Tubulin beta chain (441 aa).

8 residues coordinate GTP: Gln11, Glu69, Ser138, Gly142, Thr143, Gly144, Asn204, and Asn226. Residue Glu69 participates in Mg(2+) binding.

The protein belongs to the tubulin family. In terms of assembly, dimer of alpha and beta chains. A typical microtubule is a hollow water-filled tube with an outer diameter of 25 nm and an inner diameter of 15 nM. Alpha-beta heterodimers associate head-to-tail to form protofilaments running lengthwise along the microtubule wall with the beta-tubulin subunit facing the microtubule plus end conferring a structural polarity. Microtubules usually have 13 protofilaments but different protofilament numbers can be found in some organisms and specialized cells. The cofactor is Mg(2+).

The protein localises to the cytoplasm. It is found in the cytoskeleton. Functionally, tubulin is the major constituent of microtubules, a cylinder consisting of laterally associated linear protofilaments composed of alpha- and beta-tubulin heterodimers. Microtubules grow by the addition of GTP-tubulin dimers to the microtubule end, where a stabilizing cap forms. Below the cap, tubulin dimers are in GDP-bound state, owing to GTPase activity of alpha-tubulin. In Babesia bovis, this protein is Tubulin beta chain.